The following is a 473-amino-acid chain: MSKEEFMKIQTCVLKVNIHCDGCKQKVKKILQKIEGVFTTKIDSEQGKVTVSGSVDPSVLIKKLAKSGKHAEIWGAPKGNNNPNQSQMANQFKGMQIDHGKAGGGGGGNNNNNKKGQKNGGGGGGGGGGGNSNAPKMGQQLNPQHLQQLQQLQKMKGFQDLKLPPQLKGSVPVNKNQNQKGVKFDVPEDDDDDDFSDEFDDEFTDDDDDEFDDEFDDLPLPSNKMKPNMTMMPNAQQMMMNAQKNANLAGGPAKNGGKGAPAAGGGGAGGGKGAGGGAKGGPGNQNQGGGKNGGGGHPQDGKNGGGGGGPNAGKKGNGGGGPMAGGVSGGFRPMGGGGPQNMSMPMGGQMGMGGPMGNMPAVQGLPATGPGGAPQGYFQGAGIDPMQMQQQQQQQQYLAAVMNQQRAMGNERFQPMMYARPPPAVNYMPPNPHQYPNPHPYPYPYPYPYPPPYGNDQYSHAFSDENTSSCDIM.

The HMA domain maps to Ile9–Glu72. Cys20 and Cys23 together coordinate a metal cation. Disordered stretches follow at residues Gln96–Gln139, Lys162–Thr230, and Ala246–Ser343. Residues Lys118 to Asn131 are compositionally biased toward gly residues. Over residues Pro187–Asp217 the composition is skewed to acidic residues. Positions Ala253–Pro339 are enriched in gly residues. The residue at position 470 (Cys470) is a Cysteine methyl ester. A lipid anchor (S-farnesyl cysteine) is attached at Cys470. A propeptide spans Asp471–Met473 (removed in mature form).

It belongs to the HIPP family.

Functionally, heavy-metal-binding protein. In Arabidopsis thaliana (Mouse-ear cress), this protein is Heavy metal-associated isoprenylated plant protein 32.